The sequence spans 354 residues: Photosystem II protein D1 3 (354 aa).

Helical transmembrane passes span 29 to 46 (YIGW…TATT), 118 to 133 (HFLI…EWEL), and 142 to 156 (WIAV…AATA). H118 contacts chlorophyll a. Y126 serves as a coordination point for pheophytin a. [CaMn4O5] cluster-binding residues include D170 and E189. A helical transmembrane segment spans residues 197–218 (FHQLGVAGVFGGALFSAMHGSL). H198 contributes to the chlorophyll a binding site. A quinone contacts are provided by residues H215 and 264-265 (SF). H215 is a binding site for Fe cation. H272 provides a ligand contact to Fe cation. The helical transmembrane segment at 274-288 (FLAAWPVIGIWFTAL) threads the bilayer. 4 residues coordinate [CaMn4O5] cluster: H332, E333, D342, and A344. Residues 345 to 354 (AVEVAPAVRG) constitute a propeptide that is removed on maturation.

This sequence belongs to the reaction center PufL/M/PsbA/D family. In terms of assembly, PSII is composed of 1 copy each of membrane proteins PsbA, PsbB, PsbC, PsbD, PsbE, PsbF, PsbH, PsbI, PsbJ, PsbK, PsbL, PsbM, PsbT, PsbX, PsbY, PsbZ, Psb30/Ycf12, peripheral proteins PsbO, CyanoQ (PsbQ), PsbU, PsbV and a large number of cofactors. It forms dimeric complexes. The D1/D2 heterodimer binds P680, chlorophylls that are the primary electron donor of PSII, and subsequent electron acceptors. It shares a non-heme iron and each subunit binds pheophytin, quinone, additional chlorophylls, carotenoids and lipids. D1 provides most of the ligands for the Mn4-Ca-O5 cluster of the oxygen-evolving complex (OEC). There is also a Cl(-1) ion associated with D1 and D2, which is required for oxygen evolution. The PSII complex binds additional chlorophylls, carotenoids and specific lipids. serves as cofactor. Tyr-161 forms a radical intermediate that is referred to as redox-active TyrZ, YZ or Y-Z. In terms of processing, C-terminally processed by CtpA; processing is essential to allow assembly of the oxygen-evolving complex and thus photosynthetic growth.

It localises to the cellular thylakoid membrane. The enzyme catalyses 2 a plastoquinone + 4 hnu + 2 H2O = 2 a plastoquinol + O2. Its function is as follows. Photosystem II (PSII) is a light-driven water:plastoquinone oxidoreductase that uses light energy to abstract electrons from H(2)O, generating O(2) and a proton gradient subsequently used for ATP formation. It consists of a core antenna complex that captures photons, and an electron transfer chain that converts photonic excitation into a charge separation. The D1/D2 (PsbA/PsbD) reaction center heterodimer binds P680, the primary electron donor of PSII as well as several subsequent electron acceptors. The polypeptide is Photosystem II protein D1 3 (Synechococcus sp. (strain JA-3-3Ab) (Cyanobacteria bacterium Yellowstone A-Prime)).